Consider the following 119-residue polypeptide: Probable cyclase otaY (119 aa).

It belongs to the aurE cyclase family.

Its pathway is mycotoxin biosynthesis. Its function is as follows. Probable cyclase; part of the gene cluster that mediates the biosynthesis of ochratoxin A (OTA), a mycotoxin composed of a chlorinated type I polyketide dihydroisocoumarin moiety linked to L-phenylalanine, and demonstrated to have nephrotoxic, immunotoxic, genotoxic, neurotoxic, and teratogenic properties. OtaY is probably involved in the polyketide cyclization. The pathway begins with the highly reducing polyketide synthase otaA that catalyzes the formation of the isocoumarin group during the initial stages of biosynthesis, starting from one acetate and 4 malonate units, to originate the characteristic pentaketide skeleton 7-methylmellein (7-MM) of the OTA molecule. The newly identified cyclase otaY might be involved in the polyketide cyclization reaction during the initial steps of the OTA biosynthesis. 7-MM is then oxidized into 7-carboxymellein (also called ochratoxin beta) by the cytochrome P450 monooxygenase otaC. The NRPS encoded by the otaB gene is involved in the linking of phenylalanine to the dihydroisocoumarin ring. The reaction catalyzed by NRPS results in the production of ochratoxin B (OTB), which is the non-chlorinated analog of OTA and which subsequently serves as the substrate of the halogenase otaD for chlorination activity to form the final molecular structure of OTA, containing a chlorine atom in the C-5 position of the molecule. This Aspergillus niger (strain ATCC MYA-4892 / CBS 513.88 / FGSC A1513) protein is Probable cyclase otaY.